A 76-amino-acid polypeptide reads, in one-letter code: U1-cyrtautoxin-As1d (76 aa).

Intrachain disulfides connect Cys23/Cys37, Cys30/Cys51, Cys36/Cys66, and Cys69/Cys76.

It belongs to the neurotoxin 21 family. Expressed by the venom gland.

The protein localises to the secreted. Neurotoxin with probable ion channel impairing activity. In vivo, is both paralytic and lethal, when injected into lepidopteran larvae. The protein is U1-cyrtautoxin-As1d of Apomastus schlingeri (Trap-door spider).